A 696-amino-acid polypeptide reads, in one-letter code: Polyphosphate kinase (696 aa).

N45 is an ATP binding site. Mg(2+) contacts are provided by R373 and R403. Positions 428 to 462 (PGLKIHSKLLMISRREGDDIIRYAHIGTGNFHEKT) constitute a PLD phosphodiesterase domain. The active-site Phosphohistidine intermediate is the H433. Residues Y466, R562, and H590 each coordinate ATP.

Belongs to the polyphosphate kinase 1 (PPK1) family. Mg(2+) serves as cofactor. Post-translationally, an intermediate of this reaction is the autophosphorylated ppk in which a phosphate is covalently linked to a histidine residue through a N-P bond.

It catalyses the reaction [phosphate](n) + ATP = [phosphate](n+1) + ADP. In terms of biological role, catalyzes the reversible transfer of the terminal phosphate of ATP to form a long-chain polyphosphate (polyP). The chain is Polyphosphate kinase from Vibrio parahaemolyticus serotype O3:K6 (strain RIMD 2210633).